Consider the following 669-residue polypeptide: Beta-galactosidase (669 aa).

A signal peptide spans 1 to 24 (MDFPGAARLLSLLLVPLLLGPARG). The propeptide occupies 25 to 29 (LRNAS). Asn27 carries an N-linked (GlcNAc...) asparagine glycan. Substrate is bound by residues Tyr84, Glu130, and Asn188. Glu189 functions as the Proton donor in the catalytic mechanism. A disulfide bridge links Cys196 with Cys231. N-linked (GlcNAc...) asparagine glycosylation is present at Asn248. Glu269 serves as the catalytic Nucleophile. Tyr334 contributes to the substrate binding site. Asn465, Asn499, Asn547, and Asn557 each carry an N-linked (GlcNAc...) asparagine glycan. Residues Cys628 and Cys636 are joined by a disulfide bond. Residues 649–669 (TPTSSHPLPDLSDRDSGWDRV) are disordered. The segment covering 659-669 (LSDRDSGWDRV) has biased composition (basic and acidic residues).

Belongs to the glycosyl hydrolase 35 family. As to quaternary structure, homodimer. May form higher multimers.

Its subcellular location is the lysosome. The catalysed reaction is Hydrolysis of terminal non-reducing beta-D-galactose residues in beta-D-galactosides.. Cleaves beta-linked terminal galactosyl residues from gangliosides, glycoproteins, and glycosaminoglycans. The protein is Beta-galactosidase (GLB1) of Felis catus (Cat).